Consider the following 1088-residue polypeptide: METLTELGDELTLGDIDEMLQFVSNQVGEFPDLFEEQLCQSYQGNNAMDTTLPKAYNQAAQQPYTTSAPQPQLLPVKAPPQATPQRTAPLLQPRPVVQTSPQPQLQQQTVMLTPNFSTAPQTRIIQQPLIYQNAATTSFQVLQPPVQSLMTTQQMQPVTIQQQVQTVQAQRVLTQAANGTIQTLTPATVQTVTPHVQQVPVLVQPQIIKTESLVLTAVKADGSPVMTAVQNPAITTLAGTLQTTALQVPTLMGSNGTILTTMPVMMGQEKMPIKQVPGSLKLAEVPKEGERRTTHNIIEKRYRSSINDKIMELKDLVMGTDAKMHKSGVLKKAIDYIKYLQQVNQKLRQENMALKLANQKNKYLKGIDLSSLVDTSIGMKIDEFNQNALMMSPPASDSGSPAVFSPYSVDSEPGSPLLDDEKVKDEPDSPTGLGMMDRSRMLLCTMTFLCLSFNPLTSLLHPESGQYSERAVQHGTGRTMLGVEMSGFYGSWFDWLIPTIILWLVNGVIVLSVFMKLLIHGEPVTRLHSRSSVKFWRHRKQADLDLAKGDFGAAALNLQTCLCVLGRSLPATRLDLACSLSWNIIRCSLQKISLVRWLLKHSPGYCKKAEFQDEATTSARDAALVYHKLHQLHLTGKLPSNWNCSGLNLALCAVNLAECAGNKISPTLLAEIHLTTAIQMKTSFPSRFRFLTAYFLGYAQNASSEETLPDPMRWLAHPLGKYFFINSNWALKSAAKDSLYTSTRNPANPVTQIHRAFCESLLEKAMYTMAKPETSKAASEEESCEFSRAQEYLKLLSGFADSVGNVASLPLGGSSPMSSADPICRWWYSVSSMAIGWLQGDDSVVKSHFAEVERIPKLLDSDNPLVKAVIHMCRAMQAAVLGKCDGQQNSFYHCEKASAFLWNSLNISSTGNTNLNKVVQLLICDLLLSLRTSLWQKQSSSPAAGDSIHAPTPALTGFQRDLSSLRRLSLTFKPAHCKLFLHEATVRLMADASPTRTHQLLQHSLQKCTALANKQGDLDSLPGQRERATAILLACRHLPLSFLSSPGQRAIMLAEAARTLEKVGDRRSYHDCQQMMVKLSGGTAMAAS.

The segment at 1–38 (METLTELGDELTLGDIDEMLQFVSNQVGEFPDLFEEQL) is transcriptional activation (acidic). Residues 1–440 (METLTELGDE…TGLGMMDRSR (440 aa)) are Cytoplasmic-facing. The span at 59–70 (AAQQPYTTSAPQ) shows a compositional bias: polar residues. Positions 59-87 (AAQQPYTTSAPQPQLLPVKAPPQATPQRT) are disordered. The bHLH domain occupies 290–340 (ERRTTHNIIEKRYRSSINDKIMELKDLVMGTDAKMHKSGVLKKAIDYIKYL). The interval 340–361 (LQQVNQKLRQENMALKLANQKN) is leucine-zipper. The interval 392 to 431 (SPPASDSGSPAVFSPYSVDSEPGSPLLDDEKVKDEPDSPT) is disordered. The chain crosses the membrane as a helical span at residues 441–461 (MLLCTMTFLCLSFNPLTSLLH). Topologically, residues 462–494 (PESGQYSERAVQHGTGRTMLGVEMSGFYGSWFD) are lumenal. The chain crosses the membrane as a helical span at residues 495–515 (WLIPTIILWLVNGVIVLSVFM). The Cytoplasmic segment spans residues 516 to 1088 (KLLIHGEPVT…LSGGTAMAAS (573 aa)).

The protein belongs to the SREBP family. In terms of assembly, forms a tight complex with scap, the SCAP-SREBP complex, in the endoplasmic reticulum membrane. As to quaternary structure, homodimer; efficient DNA binding of the soluble transcription factor fragment requires dimerization with another bHLH protein. Post-translationally, processed in the Golgi apparatus, releasing the protein from the membrane. At low cholesterol the SCAP-SREBP complex is recruited into COPII vesicles for export from the endoplasmic reticulum. In the Golgi, complex SREBPs are cleaved sequentially by site-1 (MBTPS1, S1P) and site-2 (MBTPS2, S2P) proteases. The first cleavage by site-1 protease occurs within the luminal loop, the second cleavage by site-2 protease occurs within the first transmembrane domain, releasing the transcription factor from the Golgi membrane.

It localises to the endoplasmic reticulum membrane. Its subcellular location is the golgi apparatus membrane. The protein localises to the cytoplasmic vesicle. It is found in the COPII-coated vesicle membrane. The protein resides in the nucleus. Functionally, precursor of the transcription factor form (Processed sterol regulatory element-binding protein 2), which is embedded in the endoplasmic reticulum membrane. Low sterol concentrations promote processing of this form, releasing the transcription factor form that translocates into the nucleus and activates transcription of genes involved in cholesterol biosynthesis. Its function is as follows. Key transcription factor that regulates expression of genes involved in cholesterol biosynthesis. Binds to the sterol regulatory element 1 (SRE-1) (5'-ATCACCCCAC-3'). Has dual sequence specificity binding to both an E-box motif (5'-ATCACGTGA-3') and to SRE-1 (5'-ATCACCCCAC-3'). Regulates transcription of genes related to cholesterol synthesis pathway. The chain is Sterol regulatory element-binding protein 2 from Xenopus laevis (African clawed frog).